Consider the following 397-residue polypeptide: MKILVVNCGSSSLKYQLIDMTSEEALAKGLVERIGIEGSILTQKVNGEKYIIEEPMKDHKKAIELVLKALVDKEHGVISDMSEIAAVGHRVVHGGEKYASSVLINDEVMKALEDCVKLAPLHNPPNIIGINACRELMPKTPMVAVFDTAFHQTLPDYAYMYPLPYELYEQNGIRKYGFHGTSHRYVSSVASEMMGKDLKDLKVITCHLGNGASLCAVKEGKSVETSMGFTPLAGLAMGTRCGDIDPAILLFMERELKMSPDEVDTVINKKSGVLGISGVSSDFRDIEGAAEEGNKRAKLALDVYHYTVRQTIGAYTAVLNGVDAIVFTAGLGENSAASREEILNGLEYLGIKIDAEKNKQRGKQIEISTEDSKVKVFVIPTDEELMIARDTKEITVK.

A Mg(2+)-binding site is contributed by asparagine 7. Lysine 14 provides a ligand contact to ATP. Substrate is bound at residue arginine 90. Aspartate 147 (proton donor/acceptor) is an active-site residue. ATP-binding positions include histidine 207–glycine 211, aspartate 282–arginine 284, and glycine 330–asparagine 334. Glutamate 383 lines the Mg(2+) pocket.

The protein belongs to the acetokinase family. As to quaternary structure, homodimer. It depends on Mg(2+) as a cofactor. Mn(2+) serves as cofactor.

The protein resides in the cytoplasm. The catalysed reaction is acetate + ATP = acetyl phosphate + ADP. Its pathway is metabolic intermediate biosynthesis; acetyl-CoA biosynthesis; acetyl-CoA from acetate: step 1/2. Its function is as follows. Catalyzes the formation of acetyl phosphate from acetate and ATP. Can also catalyze the reverse reaction. The polypeptide is Acetate kinase (Clostridium botulinum (strain ATCC 19397 / Type A)).